A 491-amino-acid chain; its full sequence is Fatty acyl-CoA reductase 1 (491 aa).

It belongs to the fatty acyl-CoA reductase family. As to expression, expressed in the endodermal cell layer surrounding the central vasculature in roots. Expressed in the hilum region of seeds. Expressed in lateral root tips, cotyledons, the shoot apex, young leaves, petals, stamen filaments, and receptacle of siliques.

The catalysed reaction is a long-chain fatty acyl-CoA + 2 NADPH + 2 H(+) = a long-chain primary fatty alcohol + 2 NADP(+) + CoA. Catalyzes the reduction of fatty acyl-CoA to fatty alcohols. Catalyzes specifically the formation of C18:0 and C22:0 fatty alcohols. Provides the fatty alcohols required for synthesis of suberin in roots, seed coat and wound-induced leaf tissue. Provides the fatty alcohols required for synthesis of alkyl hydroxycinnamates in root waxes. This Arabidopsis thaliana (Mouse-ear cress) protein is Fatty acyl-CoA reductase 1.